The sequence spans 284 residues: Protein SIC1 (284 aa).

The interval 1–89 (MTPSTPPRSR…SPFPKSSVKR (89 aa)) is disordered. T5 carries the post-translational modification Phosphothreonine; by PHO85. Polar residues-rich tracts occupy residues 18 to 52 (PSGNTSSSALMQGQKTPQKPSQNLVPVTPSTTKSF) and 61 to 79 (PNSNMGMTSPFNGLTSPQR). T33 carries the post-translational modification Phosphothreonine. S76 is subject to Phosphoserine. T173 is subject to Phosphothreonine. 2 positions are modified to phosphoserine: S198 and S201. Residues K268, K272, and K274 each carry the lysine derivative modification.

As to quaternary structure, interacts with HOG1. Post-translationally, phosphorylated by cyclin-dependent kinases CDC28 and PHO85 in association with G1-cyclins, promoting degradation of SIC1 and exit form G1. In terms of processing, may contain a covalently attached chromophore. The N-terminus is blocked.

It is found in the cytoplasm. The protein localises to the nucleus. In terms of biological role, substrate and inhibitor of the cyclin-dependent protein kinase CDC28. Its activity could be important for faithful segregation of chromosomes to daughter cells. It acts in response to a signal from a post-start checkpoint. The sequence is that of Protein SIC1 (SIC1) from Saccharomyces cerevisiae (strain ATCC 204508 / S288c) (Baker's yeast).